The chain runs to 228 residues: Ephrin-A5 (228 aa).

A signal peptide spans 1–20 (MLHVEMLTLLFLVLWMCVFS). One can recognise an Ephrin RBD domain in the interval 29–162 (ADRYAVYWNS…KLKVFVRPTN (134 aa)). Asn-37 is a glycosylation site (N-linked (GlcNAc...) asparagine). Cystine bridges form between Cys-62-Cys-102 and Cys-90-Cys-151. N-linked (GlcNAc...) asparagine; atypical glycosylation is present at Asn-162. Residues 186-205 (EPADDTVHESAEPSRGENAA) are disordered. The segment covering 190-200 (DTVHESAEPSR) has biased composition (basic and acidic residues). A lipid anchor (GPI-anchor amidated asparagine) is attached at Asn-203. Positions 204–228 (AAQTPRIPSRLLAILLFLLAMLLTL) are cleaved as a propeptide — removed in mature form.

The protein belongs to the ephrin family. As to quaternary structure, binds to the receptor tyrosine kinases EPHA2, EPHA3 and EPHB1. Forms a ternary EFNA5-EPHA3-ADAM10 complex mediating EFNA5 extracellular domain shedding by ADAM10 which regulates the EFNA5-EPHA3 complex internalization and function. Binds to EPHB2. Interacts with EPHA8; activates EPHA8. In terms of tissue distribution, expressed in myogenic progenitor cells.

It is found in the cell membrane. Its subcellular location is the membrane. It localises to the caveola. Functionally, cell surface GPI-bound ligand for Eph receptors, a family of receptor tyrosine kinases which are crucial for migration, repulsion and adhesion during neuronal, vascular and epithelial development. Binds promiscuously Eph receptors residing on adjacent cells, leading to contact-dependent bidirectional signaling into neighboring cells. The signaling pathway downstream of the receptor is referred to as forward signaling while the signaling pathway downstream of the ephrin ligand is referred to as reverse signaling. Induces compartmentalized signaling within a caveolae-like membrane microdomain when bound to the extracellular domain of its cognate receptor. This signaling event requires the activity of the Fyn tyrosine kinase. Activates the EPHA3 receptor to regulate cell-cell adhesion and cytoskeletal organization. With the receptor EPHA2 may regulate lens fiber cells shape and interactions and be important for lens transparency maintenance. May function actively to stimulate axon fasciculation. The interaction of EFNA5 with EPHA5 also mediates communication between pancreatic islet cells to regulate glucose-stimulated insulin secretion. Cognate/functional ligand for EPHA7, their interaction regulates brain development modulating cell-cell adhesion and repulsion. In Mus musculus (Mouse), this protein is Ephrin-A5 (Efna5).